The chain runs to 616 residues: UvrABC system protein C (616 aa).

Residues 11–85 (ASPGVYIFRR…IKQHRPHYNV (75 aa)) form the GIY-YIG domain. Positions 194-229 (APVIARLKADMQAAARAQDFEQAARLRDRVQAVEKL) constitute a UVR domain.

The protein belongs to the UvrC family. Interacts with UvrB in an incision complex.

It localises to the cytoplasm. The UvrABC repair system catalyzes the recognition and processing of DNA lesions. UvrC both incises the 5' and 3' sides of the lesion. The N-terminal half is responsible for the 3' incision and the C-terminal half is responsible for the 5' incision. This Deinococcus geothermalis (strain DSM 11300 / CIP 105573 / AG-3a) protein is UvrABC system protein C.